Reading from the N-terminus, the 122-residue chain is Large ribosomal subunit protein uL14 (122 aa).

It belongs to the universal ribosomal protein uL14 family. In terms of assembly, part of the 50S ribosomal subunit. Forms a cluster with proteins L3 and L19. In the 70S ribosome, L14 and L19 interact and together make contacts with the 16S rRNA in bridges B5 and B8.

Its function is as follows. Binds to 23S rRNA. Forms part of two intersubunit bridges in the 70S ribosome. The chain is Large ribosomal subunit protein uL14 from Chlorobium limicola (strain DSM 245 / NBRC 103803 / 6330).